The primary structure comprises 36 residues: Pancreatic polypeptide (36 aa).

Phenylalanine 36 is modified (phenylalanine amide).

It belongs to the NPY family.

The protein localises to the secreted. Its function is as follows. Hormone secreted by pancreatic cells that acts as a regulator of pancreatic and gastrointestinal functions. In Alligator mississippiensis (American alligator), this protein is Pancreatic polypeptide (ppy).